A 75-amino-acid polypeptide reads, in one-letter code: ATP synthase subunit c (75 aa).

2 helical membrane passes run 9–29 (IGAG…GNIW) and 52–72 (IGFA…LILL).

The protein belongs to the ATPase C chain family. In terms of assembly, F-type ATPases have 2 components, F(1) - the catalytic core - and F(0) - the membrane proton channel. F(1) has five subunits: alpha(3), beta(3), gamma(1), delta(1), epsilon(1). F(0) has four main subunits: a(1), b(1), b'(1) and c(10-14). The alpha and beta chains form an alternating ring which encloses part of the gamma chain. F(1) is attached to F(0) by a central stalk formed by the gamma and epsilon chains, while a peripheral stalk is formed by the delta, b and b' chains.

The protein resides in the cell inner membrane. Its function is as follows. F(1)F(0) ATP synthase produces ATP from ADP in the presence of a proton or sodium gradient. F-type ATPases consist of two structural domains, F(1) containing the extramembraneous catalytic core and F(0) containing the membrane proton channel, linked together by a central stalk and a peripheral stalk. During catalysis, ATP synthesis in the catalytic domain of F(1) is coupled via a rotary mechanism of the central stalk subunits to proton translocation. Functionally, key component of the F(0) channel; it plays a direct role in translocation across the membrane. A homomeric c-ring of between 10-14 subunits forms the central stalk rotor element with the F(1) delta and epsilon subunits. In Rhodospirillum rubrum (strain ATCC 11170 / ATH 1.1.1 / DSM 467 / LMG 4362 / NCIMB 8255 / S1), this protein is ATP synthase subunit c.